The chain runs to 152 residues: Putative NrdI-like protein (152 aa).

It belongs to the NrdI family.

The polypeptide is Putative NrdI-like protein (Streptococcus pyogenes serotype M18 (strain MGAS8232)).